Reading from the N-terminus, the 146-residue chain is MTKKIEEKIEGVIESLGYLLYDVSLVKENEQHVLRVSLKNPNGAVSLDICQQVSEVISPLLDVCDFIQDAYILEVSSMGLERTLKTPKHFKLSLGEKVEVKLINKESFQAVLKDANDLSADFELEDHAIKSVGYKDLKKVKTLFEW.

Belongs to the RimP family.

Its subcellular location is the cytoplasm. Functionally, required for maturation of 30S ribosomal subunits. The chain is Ribosome maturation factor RimP from Helicobacter pylori (strain HPAG1).